The primary structure comprises 182 residues: Large ribosomal subunit protein uL16 (182 aa).

Residues Glu-140–Ser-182 are disordered. The span at Thr-162–Ser-176 shows a compositional bias: low complexity.

This sequence belongs to the universal ribosomal protein uL16 family. In terms of assembly, part of the 50S ribosomal subunit.

Functionally, binds 23S rRNA and is also seen to make contacts with the A and possibly P site tRNAs. The sequence is that of Large ribosomal subunit protein uL16 from Prochlorococcus marinus (strain SARG / CCMP1375 / SS120).